Consider the following 844-residue polypeptide: MVNFTIDEIRALMDKPTNVRNMSVIAHVDHGKSTLTDSLLAKAGIISSGKAGEARATDTRADEQERGITIKSTAISLYGTLPDEEDIKDIVGQKTDGKDFLINLIDSPGHVDFSSEVTAALRVTDGALVVVDTVEGVCVQTETVLRQALGERIKPVVVINKVDRALLELQVSKEDLYQSFSRTIESVNVIISTYFDKSLGDVQVYPDRGTVAFGSGLHGWAFTIRQFATRYAKKFGVDRNKMMERLWGDNYFNPKTKKWTKNGTYEGKELERAFNQFILDPIFKIFSAVMNFKKDEVAALLEKLNLKLATDDREKEGKQLLKAVMKAFLPAADCLLEMMILHLPSPVTAQAYRAETLYEGPQDDEAAMAIKTCDPKGPLMLYVSKMVPTSDKGRFYAFGRVFAGTVRSGLKVRIQGPNYTPGKKEDLFIKAIQRTVLMMGGKVEPIDDMPAGNIVGLVGIDQFLLKSGTLTTSETAHNMKVMKFSVSPVVQRSVQVKNAQDLPKLVEGLKRLSKSDPCVLTFSNESGEHVVAGAGELHLEICLNDLENDHAGVPLTISDPVVQYRETVAGKSSMTALSKSPNKHNRLYMVAEPLEEDLCLAIEAGKITPRDDFKARARILADDFGWDVTDARKIWAFGPDTNGANLLVDQTKAVQYLNEIKDSVVSGFQWATREGPIGEEPMRSIRFNILDVTLHADAIHRGGGQIIPTARRVLYAATLLAEPSLLEPVFLVEIQVPEQAMGGVYGVLTRRRGHVFGEEQRPGTPLFTIKAYLPVMESFGFNGDLRAATSGQAFPQSVFDHWERLPGGSPLDSTSKVGQIVQEMRKRKGLKVEVPGYENYYDKL.

A tr-type G domain is found at 17–255 (TNVRNMSVIA…LWGDNYFNPK (239 aa)). 26-33 (AHVDHGKS) is a GTP binding site. Residues T57 and T59 each carry the phosphothreonine modification. GTP-binding positions include 160 to 163 (NKVD) and 215 to 217 (SGL). H700 is modified (diphthamide).

Belongs to the TRAFAC class translation factor GTPase superfamily. Classic translation factor GTPase family. EF-G/EF-2 subfamily.

It localises to the cytoplasm. The enzyme catalyses GTP + H2O = GDP + phosphate + H(+). Its function is as follows. Catalyzes the GTP-dependent ribosomal translocation step during translation elongation. During this step, the ribosome changes from the pre-translocational (PRE) to the post-translocational (POST) state as the newly formed A-site-bound peptidyl-tRNA and P-site-bound deacylated tRNA move to the P and E sites, respectively. Catalyzes the coordinated movement of the two tRNA molecules, the mRNA and conformational changes in the ribosome. In Neurospora crassa (strain ATCC 24698 / 74-OR23-1A / CBS 708.71 / DSM 1257 / FGSC 987), this protein is Elongation factor 2 (cot-3).